Here is a 291-residue protein sequence, read N- to C-terminus: DNA repair protein RecO (291 aa).

The protein belongs to the RecO family.

Involved in DNA repair and RecF pathway recombination. The chain is DNA repair protein RecO from Cupriavidus pinatubonensis (strain JMP 134 / LMG 1197) (Cupriavidus necator (strain JMP 134)).